A 603-amino-acid chain; its full sequence is NADH-ubiquinone oxidoreductase chain 5 (603 aa).

Helical transmembrane passes span 4–24, 38–58, 89–109, 122–142, 171–191, 211–233, 241–261, 273–293, 301–320, 325–347, 366–386, 405–424, 457–477, 488–508, 537–557, and 582–602; these read FTTMTALTLTSLIPPITATLI, TAIASAFTISLIPTTMFICLG, FLPVALFVTWSIMEFSLWYMA, LIFLITMIILITANNLLQLFI, AILYNRIGDIGFILTLAWFLL, LPLLGLLLAAAGKSAQLGLHPWL, TPVSALLHSSTMVVAGIFLLI, IQTLALCLGAITTLFAAICAL, IVAFSTSSQLGLMMVTIGIN, AFLHICTHAFFKALLFMCSGSII, MPLTSTSLTISSLALAGMPFL, NAWALSITLIATSLTSAYST, LMTGSLFTGFLITSNIPPTSL, LAALTATLLGLLVALDLNYLA, IPHLSLLMSQNLSLLLLDLTW, and GMIKLYFLSFLIPLLLTLLMI.

It belongs to the complex I subunit 5 family. As to quaternary structure, core subunit of respiratory chain NADH dehydrogenase (Complex I) which is composed of 45 different subunits.

Its subcellular location is the mitochondrion inner membrane. It catalyses the reaction a ubiquinone + NADH + 5 H(+)(in) = a ubiquinol + NAD(+) + 4 H(+)(out). Core subunit of the mitochondrial membrane respiratory chain NADH dehydrogenase (Complex I) which catalyzes electron transfer from NADH through the respiratory chain, using ubiquinone as an electron acceptor. Essential for the catalytic activity and assembly of complex I. The sequence is that of NADH-ubiquinone oxidoreductase chain 5 (MT-ND5) from Pongo pygmaeus (Bornean orangutan).